We begin with the raw amino-acid sequence, 149 residues long: MADNLTEEQIAEFKEAFSLFDKDGDGTITTKELGTVMRSLGQNPTEAELQDMINEVDADGNGTIDFPEFLSLMARKMKDTDTEEELVEAFKVFDRDGNGLISAAELRHVMTNLGEKLTDEEVDEMIREADVDGDGHINYEEFVRMMMAK.

Residue Ala2 is modified to N-acetylalanine. EF-hand domains lie at 8–43 (EQIA…LGQN), 44–79 (PTEA…KMKD), 81–116 (DTEE…LGEK), and 117–149 (LTDE…MMAK). Ca(2+) contacts are provided by Asp21, Asp23, Asp25, Thr27, Glu32, Asp57, Asp59, Asn61, Thr63, Glu68, Asp94, Asp96, Asn98, and Glu105. Lys116 bears the N6,N6,N6-trimethyllysine mark. Residues Asp130, Asp132, Asp134, His136, and Glu141 each contribute to the Ca(2+) site.

The protein belongs to the calmodulin family.

Functionally, calmodulin mediates the control of a large number of enzymes, ion channels and other proteins by Ca(2+). Among the enzymes to be stimulated by the calmodulin-Ca(2+) complex are a number of protein kinases and phosphatases. This chain is Calmodulin, found in Stylonychia lemnae (Ciliate).